The chain runs to 138 residues: Cysteine desulfuration protein SufE (138 aa).

The active-site Cysteine persulfide intermediate is the Cys-51.

The protein belongs to the SufE family. As to quaternary structure, homodimer. Interacts with SufS.

It is found in the cytoplasm. The protein operates within cofactor biosynthesis; iron-sulfur cluster biosynthesis. Its function is as follows. Participates in cysteine desulfuration mediated by SufS. Cysteine desulfuration mobilizes sulfur from L-cysteine to yield L-alanine and constitutes an essential step in sulfur metabolism for biosynthesis of a variety of sulfur-containing biomolecules. Functions as a sulfur acceptor for SufS, by mediating the direct transfer of the sulfur atom from the S-sulfanylcysteine of SufS, an intermediate product of cysteine desulfuration process. In Shigella sonnei (strain Ss046), this protein is Cysteine desulfuration protein SufE.